We begin with the raw amino-acid sequence, 130 residues long: Small ribosomal subunit protein uS9 (130 aa).

Residues 98-130 are disordered; it reads LKRAGLLTRDPRMKERKKPGLKKARRSPQFSKR. Residues 111-130 are compositionally biased toward basic residues; the sequence is KERKKPGLKKARRSPQFSKR.

This sequence belongs to the universal ribosomal protein uS9 family.

In Staphylococcus saprophyticus subsp. saprophyticus (strain ATCC 15305 / DSM 20229 / NCIMB 8711 / NCTC 7292 / S-41), this protein is Small ribosomal subunit protein uS9.